Consider the following 134-residue polypeptide: UPF0412 protein YaaI (134 aa).

Residues methionine 1–alanine 23 form the signal peptide.

It belongs to the UPF0412 family.

This Escherichia coli O157:H7 protein is UPF0412 protein YaaI.